Consider the following 435-residue polypeptide: WD repeat domain phosphoinositide-interacting protein 2 (435 aa).

Residues 182-222 (AHDSPLAALAFDASGTKLATASEKGTVIRVFSIPEGQKLFE) form a WD 1 repeat. The L/FRRG motif motif lies at 223-226 (FRRG). 2 WD repeats span residues 228-267 (KRCVSICSLAFSMDSIFLSASSNTETVHIFKLETIKEKPP) and 311-349 (GHKNICALATIQKISRLLVGAADGYLYIYNFDPQEGGEC). Residues 386–435 (VTKTYPPPSPTRHAYADDLGAVGGASEEDEMGNLRLDEDNENPPMILQTE) form a disordered region.

This sequence belongs to the WD repeat PROPPIN family.

The protein resides in the preautophagosomal structure membrane. In terms of biological role, component of the autophagy machinery that controls the major intracellular degradation process by which cytoplasmic materials are packaged into autophagosomes and delivered to lysosomes for degradation. Involved in an early step of the formation of preautophagosomal structures. This chain is WD repeat domain phosphoinositide-interacting protein 2 (wipi2), found in Xenopus laevis (African clawed frog).